The sequence spans 899 residues: Bifunctional uridylyltransferase/uridylyl-removing enzyme (899 aa).

The tract at residues 1–347 (MFISDPTDSL…PESERPEKSV (347 aa)) is uridylyltransferase. Positions 348-718 (LNARFNRVGD…EHRELALDAV (371 aa)) are uridylyl-removing. The HD domain maps to 465 to 581 (VDAHILLLIR…TKFANLVGNV (117 aa)). 2 consecutive ACT domains span residues 719 to 804 (QIFI…RLPR) and 827 to 899 (VMSL…TPSC).

The protein belongs to the GlnD family. Mg(2+) is required as a cofactor.

It catalyses the reaction [protein-PII]-L-tyrosine + UTP = [protein-PII]-uridylyl-L-tyrosine + diphosphate. It carries out the reaction [protein-PII]-uridylyl-L-tyrosine + H2O = [protein-PII]-L-tyrosine + UMP + H(+). Uridylyltransferase (UTase) activity is inhibited by glutamine, while glutamine activates uridylyl-removing (UR) activity. In terms of biological role, modifies, by uridylylation and deuridylylation, the PII regulatory proteins (GlnB and homologs), in response to the nitrogen status of the cell that GlnD senses through the glutamine level. Under low glutamine levels, catalyzes the conversion of the PII proteins and UTP to PII-UMP and PPi, while under higher glutamine levels, GlnD hydrolyzes PII-UMP to PII and UMP (deuridylylation). Thus, controls uridylylation state and activity of the PII proteins, and plays an important role in the regulation of nitrogen assimilation and metabolism. In Psychrobacter sp. (strain PRwf-1), this protein is Bifunctional uridylyltransferase/uridylyl-removing enzyme.